The primary structure comprises 489 residues: Probable capsid protein (489 aa).

Over residues 87-101 (RMERGESSETKREQQ) the composition is skewed to basic and acidic residues. The segment at 87-111 (RMERGESSETKREQQDLGATRKRKI) is disordered. Residues 107-110 (RKRK) carry the Nuclear localization signal motif. The segment at 409–426 (CRCWICTEEGHYANECPN) adopts a CCHC-type zinc-finger fold. The disordered stretch occupies residues 466–489 (ETTSEEESTTDSDSSSSDDEQLSF).

Belongs to the caulimoviridae capsid protein family. Interacts (via nuclear localization signal) with host importin alpha.

Its subcellular location is the virion. It localises to the host nucleus. In terms of biological role, self assembles to form an icosahedral capsid, about 50 nm in diameter, nm, composed of 420 subunits of the viral capsid protein. The capsid encapsulates the genomic dsDNA. Following virus entry into host cell, provides nuclear import of the viral genome. Virus particles do not enter the nucleus, but dock at the nuclear membrane through the interaction with host importins. This is Probable capsid protein from Scrophularia californica (California bee plant).